Here is a 773-residue protein sequence, read N- to C-terminus: Immunoglobulin domain and leucine-rich repeat-containing protein 2 (773 aa).

Positions 1–20 (MRKFVFFVVAILIQIHTTTS) are cleaved as a signal peptide. Topologically, residues 21-493 (QRNRSSSPSG…DWYSYDVFNS (473 aa)) are extracellular. 6 LRR repeats span residues 52–73 (TRNI…KIYG), 74–96 (SNIQ…IFAP), 97–120 (FPQL…VIHP), 122–144 (LKVL…LLSI), 145–167 (FPKI…DTSN), and 168–191 (TKLK…TLRV). N114 carries N-linked (GlcNAc...) asparagine glycosylation. N-linked (GlcNAc...) asparagine glycosylation occurs at N204. LRR repeat units lie at residues 206 to 230 (STKL…DWKF), 233 to 251 (LRSL…QLDA), 252 to 275 (PLLN…ILTP), and 296 to 319 (PSTV…FIPM). Residues 349-479 (PVYAQTSIRK…GKDYGIYHFR (131 aa)) form the Ig-like domain. N-linked (GlcNAc...) asparagine glycosylation is found at N361 and N379. C396 and C463 are oxidised to a cystine. The helical transmembrane segment at 494–514 (VFWGGLATSLIVCLISFLLNI) threads the bilayer. The Cytoplasmic portion of the chain corresponds to 515-773 (TWILTRKSAL…RSPDSPPEKR (259 aa)). The interval 725–773 (VRPGIIPTNAPSIRFTTKPTTSSISNEASTSSPSSSGAHRSPDSPPEKR) is disordered. Residues 733–745 (NAPSIRFTTKPTT) are compositionally biased toward polar residues. Over residues 746-763 (SSISNEASTSSPSSSGAH) the composition is skewed to low complexity. The span at 764-773 (RSPDSPPEKR) shows a compositional bias: basic and acidic residues.

The protein localises to the membrane. The chain is Immunoglobulin domain and leucine-rich repeat-containing protein 2 from Caenorhabditis elegans.